Here is a 262-residue protein sequence, read N- to C-terminus: UDP-2,3-diacylglucosamine hydrolase (262 aa).

Mn(2+) contacts are provided by D10, H12, D47, N86, H121, H218, and H220.

The protein belongs to the LpxH family. Requires Mn(2+) as cofactor.

The protein localises to the cell inner membrane. It localises to the cytoplasm. The enzyme catalyses UDP-2-N,3-O-bis[(3R)-3-hydroxytetradecanoyl]-alpha-D-glucosamine + H2O = 2-N,3-O-bis[(3R)-3-hydroxytetradecanoyl]-alpha-D-glucosaminyl 1-phosphate + UMP + 2 H(+). It participates in glycolipid biosynthesis; lipid IV(A) biosynthesis; lipid IV(A) from (3R)-3-hydroxytetradecanoyl-[acyl-carrier-protein] and UDP-N-acetyl-alpha-D-glucosamine: step 4/6. Functionally, hydrolyzes the pyrophosphate bond of UDP-2,3-diacylglucosamine to yield 2,3-diacylglucosamine 1-phosphate (lipid X) and UMP by catalyzing the attack of water at the alpha-P atom. Involved in the biosynthesis of lipid A, a phosphorylated glycolipid that anchors the lipopolysaccharide to the outer membrane of the cell. In Porphyromonas gingivalis (strain ATCC BAA-308 / W83), this protein is UDP-2,3-diacylglucosamine hydrolase.